We begin with the raw amino-acid sequence, 263 residues long: Splicing regulator sde2 (263 aa).

The propeptide at 1–84 (MECKTVFLNG…LTLCTRVLGG (84 aa)) is UBL. Disordered regions lie at residues 95 to 118 (AGGR…LDGN), 137 to 158 (PAET…LAAD), and 194 to 263 (STSA…LYGL). Positions 102–117 (KRNEQENQDSCRDLDG) are enriched in basic and acidic residues. Composition is skewed to low complexity over residues 194–209 (STSA…GATT) and 219–230 (NNNSSINSWSRR).

Belongs to the SDE2 family. Interacts with cay1/cactin. Interacts with prp19. Interacts with cwf12. Interacts with cdc5. The N-terminal UBL (ubiquitin-like) propeptide is cleaved at Gly-84 by the deubiquitinating enzymes ubp5 and ubp15; the resulting mature sde2 associates with spliceosomes. Post-translationally, polyubiquitinated; ubiquitination is partially dependent on ubr11.

The protein resides in the cytoplasm. It localises to the nucleus. Plays a role in pre-mRNA splicing by facilitating excision of introns featuring relatively long (&gt;21 nucleotides) spacing between the branchpoint and 3'-splice site (ss). Recruits cactin to the spliceosome which may enable folding of RNA between the branchpoint and 3'-ss, to guide the splice site towards the spliceosome's catalytic center. Required for proper chromatin organization by assisting splicing of components involved in genomic stability and telomere organization. This chain is Splicing regulator sde2, found in Schizosaccharomyces pombe (strain 972 / ATCC 24843) (Fission yeast).